Consider the following 399-residue polypeptide: Probable dual-specificity RNA methyltransferase RlmN (399 aa).

The active-site Proton acceptor is the glutamate 97. One can recognise a Radical SAM core domain in the interval 103–381; that stretch reads YPDRATVCVS…CTVRVERGVS (279 aa). Cysteine 110 and cysteine 386 form a disulfide bridge. The [4Fe-4S] cluster site is built by cysteine 117, cysteine 121, and cysteine 124. S-adenosyl-L-methionine contacts are provided by residues 203 to 204, serine 235, 258 to 260, and asparagine 343; these read GE and SLH. Residue cysteine 386 is the S-methylcysteine intermediate of the active site.

It belongs to the radical SAM superfamily. RlmN family. The cofactor is [4Fe-4S] cluster.

It is found in the cytoplasm. It carries out the reaction adenosine(2503) in 23S rRNA + 2 reduced [2Fe-2S]-[ferredoxin] + 2 S-adenosyl-L-methionine = 2-methyladenosine(2503) in 23S rRNA + 5'-deoxyadenosine + L-methionine + 2 oxidized [2Fe-2S]-[ferredoxin] + S-adenosyl-L-homocysteine. The enzyme catalyses adenosine(37) in tRNA + 2 reduced [2Fe-2S]-[ferredoxin] + 2 S-adenosyl-L-methionine = 2-methyladenosine(37) in tRNA + 5'-deoxyadenosine + L-methionine + 2 oxidized [2Fe-2S]-[ferredoxin] + S-adenosyl-L-homocysteine. In terms of biological role, specifically methylates position 2 of adenine 2503 in 23S rRNA and position 2 of adenine 37 in tRNAs. This is Probable dual-specificity RNA methyltransferase RlmN from Roseiflexus sp. (strain RS-1).